The primary structure comprises 408 residues: MSIVYLVSITFIFSVFKPITSCRVEECAAWFQKTKDYENLVPKATERYCQVLQTYLKCMNDTQRYCHGNLRFHSSELIMRRHWKEFECEKWESCNDNSHVKRKHVNTCYFNPPPSNRKLKYCSLFGDPHLIMFNGSVQTCSEEGARPLVDNRYFLVQVTNRNVRGEALTTTVTKVTVLVRKHNCTASLRYEASSDEEGLPRGFVDGTTFQMTSKHSVEVLWQDDNYVEIALHFIHSSIHIRRQGPYLSVSVRAPTIVLETGGDVARELCWSGCRKSSRIPAELAVEMTKKFAECYRRRVHVPKKVAEDRCKDIGNIGVFFDACVFDLMFTGDDYLVHLSRAAESDFRRLAPHHFQSHVTQQHARFQKENQHKNHINQSEIFKKCIPSKSIRFYPFLAIFFFALLSLLC.

A signal peptide spans 1-22 (MSIVYLVSITFIFSVFKPITSC). The Extracellular segment spans residues 23–387 (RVEECAAWFQ…SEIFKKCIPS (365 aa)). Asparagine 60, asparagine 134, asparagine 183, and asparagine 376 each carry an N-linked (GlcNAc...) asparagine glycan. A helical transmembrane segment spans residues 388-408 (KSIRFYPFLAIFFFALLSLLC).

It belongs to the repulsive guidance molecule (RGM) family. Interacts with unc-40 (via FN6 domain), dbl-1 and sma-6. Expressed in pharyngeal, hypodermal and intestinal cells.

Its subcellular location is the cell membrane. Probably in association with the cell surface receptor unc-40, positively modulates the BMP-like Sma/Mab signaling pathway through interaction with both the ligand dbl-1 and its type I receptor sma-6. Regulates body size and this may be through modulation of the Sma/Mab signaling pathway. The polypeptide is Repulsive guidance molecule B homolog drag-1 (Caenorhabditis elegans).